A 317-amino-acid chain; its full sequence is Apolipoprotein E (317 aa).

The first 18 residues, 1-18, serve as a signal peptide directing secretion; the sequence is MKVLWAALLVTFLAGCQA. 8 repeat units span residues 80–101, 102–123, 124–145, 146–167, 168–189, 190–211, 212–233, and 234–255. The segment at 80-255 is 8 X 22 AA approximate tandem repeats; the sequence is TLMDETMKEL…RLDEVKEQVA (176 aa). Met143 carries the post-translational modification Methionine sulfoxide. Residue Ser147 is modified to Phosphoserine. The interval 158–168 is LDL and other lipoprotein receptors binding; it reads HLRKLRKRLLR. 162-165 contacts heparin; sequence LRKR. Positions 210-290 are lipid-binding and lipoprotein association; the sequence is AATVGSLAGQ…SWFEPLVEDM (81 aa). 229–236 contributes to the heparin binding site; that stretch reads GERLRARM. Residues 266 to 317 form a homooligomerization region; it reads QQISLQAEAFQARLKSWFEPLVEDMQRQWAGLVEKVQAAVGASTAPVPSDNH. The segment at 278 to 290 is specificity for association with VLDL; that stretch reads RLKSWFEPLVEDM.

The protein belongs to the apolipoprotein A1/A4/E family. In terms of assembly, homotetramer. May interact with ABCA1; functionally associated with ABCA1 in the biogenesis of HDLs. May interact with APP/A4 amyloid-beta peptide; the interaction is extremely stable in vitro but its physiological significance is unclear. May interact with MAPT. May interact with MAP2. In the cerebrospinal fluid, interacts with secreted SORL1. Interacts with PMEL; this allows the loading of PMEL luminal fragment on ILVs to induce fibril nucleation. APOE exists as multiple glycosylated and sialylated glycoforms within cells and in plasma. The extent of glycosylation and sialylation are tissue and context specific. Post-translationally, glycated in plasma VLDL. In terms of processing, phosphorylated by FAM20C in the extracellular medium.

It localises to the secreted. The protein localises to the extracellular space. Its subcellular location is the extracellular matrix. It is found in the extracellular vesicle. The protein resides in the endosome. It localises to the multivesicular body. In terms of biological role, APOE is an apolipoprotein, a protein associating with lipid particles, that mainly functions in lipoprotein-mediated lipid transport between organs via the plasma and interstitial fluids. APOE is a core component of plasma lipoproteins and is involved in their production, conversion and clearance. Apolipoproteins are amphipathic molecules that interact both with lipids of the lipoprotein particle core and the aqueous environment of the plasma. As such, APOE associates with chylomicrons, chylomicron remnants, very low density lipoproteins (VLDL) and intermediate density lipoproteins (IDL) but shows a preferential binding to high-density lipoproteins (HDL). It also binds a wide range of cellular receptors including the LDL receptor/LDLR, the LDL receptor-related proteins LRP1, LRP2 and LRP8 and the very low-density lipoprotein receptor/VLDLR that mediate the cellular uptake of the APOE-containing lipoprotein particles. Finally, APOE also has a heparin-binding activity and binds heparan-sulfate proteoglycans on the surface of cells, a property that supports the capture and the receptor-mediated uptake of APOE-containing lipoproteins by cells. A main function of APOE is to mediate lipoprotein clearance through the uptake of chylomicrons, VLDLs, and HDLs by hepatocytes. APOE is also involved in the biosynthesis by the liver of VLDLs as well as their uptake by peripheral tissues ensuring the delivery of triglycerides and energy storage in muscle, heart and adipose tissues. By participating in the lipoprotein-mediated distribution of lipids among tissues, APOE plays a critical role in plasma and tissues lipid homeostasis. APOE is also involved in two steps of reverse cholesterol transport, the HDLs-mediated transport of cholesterol from peripheral tissues to the liver, and thereby plays an important role in cholesterol homeostasis. First, it is functionally associated with ABCA1 in the biogenesis of HDLs in tissues. Second, it is enriched in circulating HDLs and mediates their uptake by hepatocytes. APOE also plays an important role in lipid transport in the central nervous system, regulating neuron survival and sprouting. The polypeptide is Apolipoprotein E (APOE) (Colobus guereza (Mantled guereza)).